The chain runs to 179 residues: Large ribosomal subunit protein uL6 (179 aa).

This sequence belongs to the universal ribosomal protein uL6 family. Part of the 50S ribosomal subunit.

Functionally, this protein binds to the 23S rRNA, and is important in its secondary structure. It is located near the subunit interface in the base of the L7/L12 stalk, and near the tRNA binding site of the peptidyltransferase center. In Prochlorococcus marinus (strain MIT 9211), this protein is Large ribosomal subunit protein uL6.